Reading from the N-terminus, the 263-residue chain is MWELRSASFWRAIFAEFFATLFYVFFGLGASLRWAPGPLHVLQVALAFGLALAXLVQTVGHISGAHVNPAVTFXFLVGSQMSLLRAFCYMAAQLLGAVAGAAVLYSVTPPAVRGNLALNTLHAGVSVXQATTVEIFLTLQFVLCIFATYDERRNGRLGSVALAVGFSLTLGHLFGMYYTGAGMNPARSFAPAILTRNFTNHWVYWVGPIIGGGLGSLLYDFLLFPRLKSVSERLSILKGTRPSDNNGQPEGTGEPVELKTQAL.

The Cytoplasmic portion of the chain corresponds to 1–9 (MWELRSASF). Residues 10-29 (WRAIFAEFFATLFYVFFGLG) form a helical membrane-spanning segment. The Extracellular segment spans residues 30 to 41 (ASLRWAPGPLHV). The helical transmembrane segment at 42–59 (LQVALAFGLALAXLVQTV) threads the bilayer. Residues 60–61 (GH) are Cytoplasmic-facing. The segment at residues 62 to 77 (ISGAHVNPAVTFXFLV) is an intramembrane region (discontinuously helical). The short motif at 68-70 (NPA) is the NPA 1 element. The Cytoplasmic portion of the chain corresponds to 78 to 82 (GSQMS). Residues 83–106 (LLRAFCYMAAQLLGAVAGAAVLYS) form a helical membrane-spanning segment. At 107–127 (VTPPAVRGNLALNTLHAGVSV) the chain is on the extracellular side. A helical membrane pass occupies residues 128 to 148 (XQATTVEIFLTLQFVLCIFAT). Residues 149–156 (YDERRNGR) are Cytoplasmic-facing. A helical membrane pass occupies residues 157–175 (LGSVALAVGFSLTLGHLFG). At 176-178 (MYY) the chain is on the extracellular side. Residues 179–193 (TGAGMNPARSFAPAI) constitute an intramembrane region (discontinuously helical). Positions 184–186 (NPA) match the NPA 2 motif. At 194-200 (LTRNFTN) the chain is on the extracellular side. A helical transmembrane segment spans residues 201-222 (HWVYWVGPIIGGGLGSLLYDFL). The Cytoplasmic segment spans residues 223-263 (LFPRLKSVSERLSILKGTRPSDNNGQPEGTGEPVELKTQAL). Residues 227–237 (LKSVSERLSIL) form an interaction with CALM region. Phosphoserine occurs at positions 235 and 243. The disordered stretch occupies residues 238 to 263 (KGTRPSDNNGQPEGTGEPVELKTQAL). 2 positions are modified to deamidated asparagine; by deterioration: N245 and N246.

Belongs to the MIP/aquaporin (TC 1.A.8) family. Homotetramer; each monomer provides an independent water pore. Two homotetramers on opposing membranes can dimerize, forming a cell-cell junction. Interacts with CALM; the calcium-calmodulin/CALM complex interacts with the cytoplasmic domains of two aquaporins, leading to channel closure. Interacts with BFSP1 (via C-terminus); prevents calcium-dependent inhibition of the water channel activity. Subject to partial proteolytic cleavage in the eye lens core. Partial proteolysis promotes interactions between tetramers from adjoining membranes. Post-translationally, fatty acylated at Met-1 and Lys-238. The acyl modifications, in decreasing order of ion abundance, are: oleoyl (C18:1) &gt; palmitoyl (C16:0) &gt; stearoyl (C18:0) &gt; eicosenoyl (C20:1) &gt; dihomo-gamma-linolenoyl (C20:3) &gt; palmitoleoyl (C16:1) &gt; eicosadienoyl (C20:2). In terms of tissue distribution, detected in eye lens (at protein level).

It is found in the cell membrane. It localises to the cell junction. It catalyses the reaction H2O(in) = H2O(out). The water channel activity is inhibited by calcium through calmodulin/CALM. Aquaporins form homotetrameric transmembrane channels, with each monomer independently mediating water transport across the plasma membrane along its osmotic gradient. Specifically expressed in lens fiber cells, this aquaporin is crucial for maintaining lens water homeostasis and transparency. Beyond water permeability, it also acts as a cell-to-cell adhesion molecule, forming thin junctions between lens fiber cells that are essential for maintaining the ordered structure and transparency of the lens. The polypeptide is Lens fiber major intrinsic protein (Cavia porcellus (Guinea pig)).